The primary structure comprises 466 residues: Asparagine--tRNA ligase (466 aa).

The protein belongs to the class-II aminoacyl-tRNA synthetase family. In terms of assembly, homodimer.

It is found in the cytoplasm. It catalyses the reaction tRNA(Asn) + L-asparagine + ATP = L-asparaginyl-tRNA(Asn) + AMP + diphosphate + H(+). The chain is Asparagine--tRNA ligase from Shewanella sp. (strain ANA-3).